Here is a 93-residue protein sequence, read N- to C-terminus: MAKGQSLQDPYLNALRRERIPVSIYLVNGIKLQGQIESFDQFVILLKNTVSQMVYKHAISTVVPARAISHNNNSNHAHQAAPVQSAEVVEKVE.

Positions 9 to 68 (DPYLNALRRERIPVSIYLVNGIKLQGQIESFDQFVILLKNTVSQMVYKHAISTVVPARAI) constitute a Sm domain. The span at 70–81 (HNNNSNHAHQAA) shows a compositional bias: low complexity. A disordered region spans residues 70–93 (HNNNSNHAHQAAPVQSAEVVEKVE).

It belongs to the Hfq family. As to quaternary structure, homohexamer.

RNA chaperone that binds small regulatory RNA (sRNAs) and mRNAs to facilitate mRNA translational regulation in response to envelope stress, environmental stress and changes in metabolite concentrations. Also binds with high specificity to tRNAs. The sequence is that of RNA-binding protein Hfq from Glaesserella parasuis serovar 5 (strain SH0165) (Haemophilus parasuis).